Consider the following 58-residue polypeptide: MATVKVTLIKSVSGRLPNHKLCVKGLGLRRIGHTVEVQDTPENRGMINKAYYMLKVEG.

The protein belongs to the universal ribosomal protein uL30 family. In terms of assembly, part of the 50S ribosomal subunit.

This Pseudomonas putida (strain ATCC 700007 / DSM 6899 / JCM 31910 / BCRC 17059 / LMG 24140 / F1) protein is Large ribosomal subunit protein uL30.